The primary structure comprises 128 residues: Large ribosomal subunit protein mL55 (128 aa).

The transit peptide at 1–33 directs the protein to the mitochondrion; that stretch reads MAAVGSLLGRLRQSTVKATGPALRRLHTSSWRA. Ser-85 is subject to Phosphoserine.

This sequence belongs to the mitochondrion-specific ribosomal protein mL55 family. In terms of assembly, component of the mitochondrial large ribosomal subunit (mt-LSU). Mature mammalian 55S mitochondrial ribosomes consist of a small (28S) and a large (39S) subunit. The 28S small subunit contains a 12S ribosomal RNA (12S mt-rRNA) and 30 different proteins. The 39S large subunit contains a 16S rRNA (16S mt-rRNA), a copy of mitochondrial valine transfer RNA (mt-tRNA(Val)), which plays an integral structural role, and 52 different proteins.

It is found in the mitochondrion. This is Large ribosomal subunit protein mL55 (MRPL55) from Homo sapiens (Human).